The sequence spans 336 residues: Holliday junction branch migration complex subunit RuvB (336 aa).

The large ATPase domain (RuvB-L) stretch occupies residues 4-184; sequence SDRLISSQSI…FGIVQRLEYY (181 aa). Residues Ile23, Arg24, Gly65, Lys68, Thr69, Thr70, 131–133, Arg174, Tyr184, and Arg221 each bind ATP; that span reads EDY. Thr69 is a Mg(2+) binding site. A small ATPAse domain (RuvB-S) region spans residues 185 to 255; it reads SVDSLTQIVA…MAQQALEMLE (71 aa). A head domain (RuvB-H) region spans residues 258–336; it reads QHGFDLMDRK…HFGFSAIEQE (79 aa). Residues Arg313 and Arg318 each contribute to the DNA site.

It belongs to the RuvB family. In terms of assembly, homohexamer. Forms an RuvA(8)-RuvB(12)-Holliday junction (HJ) complex. HJ DNA is sandwiched between 2 RuvA tetramers; dsDNA enters through RuvA and exits via RuvB. An RuvB hexamer assembles on each DNA strand where it exits the tetramer. Each RuvB hexamer is contacted by two RuvA subunits (via domain III) on 2 adjacent RuvB subunits; this complex drives branch migration. In the full resolvosome a probable DNA-RuvA(4)-RuvB(12)-RuvC(2) complex forms which resolves the HJ.

Its subcellular location is the cytoplasm. It catalyses the reaction ATP + H2O = ADP + phosphate + H(+). Its function is as follows. The RuvA-RuvB-RuvC complex processes Holliday junction (HJ) DNA during genetic recombination and DNA repair, while the RuvA-RuvB complex plays an important role in the rescue of blocked DNA replication forks via replication fork reversal (RFR). RuvA specifically binds to HJ cruciform DNA, conferring on it an open structure. The RuvB hexamer acts as an ATP-dependent pump, pulling dsDNA into and through the RuvAB complex. RuvB forms 2 homohexamers on either side of HJ DNA bound by 1 or 2 RuvA tetramers; 4 subunits per hexamer contact DNA at a time. Coordinated motions by a converter formed by DNA-disengaged RuvB subunits stimulates ATP hydrolysis and nucleotide exchange. Immobilization of the converter enables RuvB to convert the ATP-contained energy into a lever motion, pulling 2 nucleotides of DNA out of the RuvA tetramer per ATP hydrolyzed, thus driving DNA branch migration. The RuvB motors rotate together with the DNA substrate, which together with the progressing nucleotide cycle form the mechanistic basis for DNA recombination by continuous HJ branch migration. Branch migration allows RuvC to scan DNA until it finds its consensus sequence, where it cleaves and resolves cruciform DNA. The protein is Holliday junction branch migration complex subunit RuvB of Legionella pneumophila subsp. pneumophila (strain Philadelphia 1 / ATCC 33152 / DSM 7513).